The chain runs to 448 residues: Argininosuccinate synthase (448 aa).

ATP-binding positions include 17-25 (AFSGGLDTS) and Ala43. Residue Tyr99 coordinates L-citrulline. The ATP site is built by Gly129 and Thr131. Positions 131, 135, and 136 each coordinate L-aspartate. Asn135 provides a ligand contact to L-citrulline. Residue Asp136 coordinates ATP. Positions 139 and 192 each coordinate L-citrulline. An ATP-binding site is contributed by Asp194. Residues Thr201, Glu203, and Glu280 each contribute to the L-citrulline site.

Belongs to the argininosuccinate synthase family. Type 2 subfamily. As to quaternary structure, homotetramer.

It is found in the cytoplasm. It carries out the reaction L-citrulline + L-aspartate + ATP = 2-(N(omega)-L-arginino)succinate + AMP + diphosphate + H(+). It participates in amino-acid biosynthesis; L-arginine biosynthesis; L-arginine from L-ornithine and carbamoyl phosphate: step 2/3. This Bradyrhizobium sp. (strain ORS 278) protein is Argininosuccinate synthase.